A 451-amino-acid chain; its full sequence is Probable tyrosyl-DNA phosphodiesterase (451 aa).

The tract at residues 1–34 (MKRTIQETPGPSSTTVPPPKKLNSQRNGSNLEPG) is disordered. Residues 22–32 (LNSQRNGSNLE) show a composition bias toward polar residues. His131 (nucleophile) is an active-site residue. A substrate-binding site is contributed by Lys133. The segment at 266 to 269 (SIGS) is interaction with DNA. His356 serves as the catalytic Proton donor/acceptor. Residue Lys358 participates in substrate binding.

It belongs to the tyrosyl-DNA phosphodiesterase family.

The protein resides in the nucleus. In terms of biological role, DNA repair enzyme that can remove a variety of covalent adducts from DNA through hydrolysis of a 3'-phosphodiester bond, giving rise to DNA with a free 3' phosphate. Catalyzes the hydrolysis of dead-end complexes between DNA and the topoisomerase I active site tyrosine residue. Hydrolyzes 3'-phosphoglycolates on protruding 3' ends on DNA double-strand breaks due to DNA damage by radiation and free radicals. Acts on blunt-ended double-strand DNA breaks and on single-stranded DNA. May have low 3'exonuclease activity and may be able to remove a single nucleoside from the 3'end of DNA and RNA molecules with 3'hydroxyl groups. Has no exonuclease activity towards DNA or RNA with a 3'phosphate. This is Probable tyrosyl-DNA phosphodiesterase from Caenorhabditis elegans.